A 337-amino-acid polypeptide reads, in one-letter code: Sorting nexin-15 (337 aa).

The 130-residue stretch at 1–130 (MSRQAKDDFL…EFFRGGEVTR (130 aa)) folds into the PX domain. Residues Arg-51, Ser-53, Arg-87, and Arg-96 each coordinate a 1,2-diacyl-sn-glycero-3-phospho-(1D-myo-inositol-3-phosphate). Residue Arg-105 is modified to Omega-N-methylarginine. Residues 133–156 (EVSRDLRILPPPLIPTPPPDEARL) form a disordered region. Positions 141-151 (LPPPLIPTPPP) are enriched in pro residues. 2 positions are modified to phosphoserine: Ser-201 and Ser-227. The disordered stretch occupies residues 244 to 270 (LDQEPWEPGGQEEEEAEDGEPAPAYLG). Positions 253-263 (GQEEEEAEDGE) are enriched in acidic residues. The 73-residue stretch at 265 to 337 (APAYLGQATE…RAEMLHTHLP (73 aa)) folds into the MIT domain.

This sequence belongs to the sorting nexin family. As to quaternary structure, homodimer. Interacts with SNX1, SNX2 and SNX4.

The protein resides in the cytoplasm. It is found in the membrane. The protein localises to the cytoplasmic vesicle membrane. In terms of biological role, may be involved in several stages of intracellular trafficking. Overexpression of SNX15 disrupts the normal trafficking of proteins from the plasma membrane to recycling endosomes or the TGN. The chain is Sorting nexin-15 (Snx15) from Mus musculus (Mouse).